The primary structure comprises 81 residues: Translational regulator CsrA (81 aa).

Polar residues predominate over residues 59 to 71 (SQMQHLEQGNFPT). The segment at 59 to 81 (SQMQHLEQGNFPTSFDDDDFFNR) is disordered.

This sequence belongs to the CsrA/RsmA family. Homodimer; the beta-strands of each monomer intercalate to form a hydrophobic core, while the alpha-helices form wings that extend away from the core.

It is found in the cytoplasm. A key translational regulator that binds mRNA to regulate translation initiation and/or mRNA stability. Mediates global changes in gene expression, shifting from rapid growth to stress survival by linking envelope stress, the stringent response and the catabolite repression systems. Usually binds in the 5'-UTR; binding at or near the Shine-Dalgarno sequence prevents ribosome-binding, repressing translation, binding elsewhere in the 5'-UTR can activate translation and/or stabilize the mRNA. Its function is antagonized by small RNA(s). The protein is Translational regulator CsrA of Psychrobacter sp. (strain PRwf-1).